Here is a 639-residue protein sequence, read N- to C-terminus: Chaperone protein HtpG (639 aa).

The a; substrate-binding stretch occupies residues 1-343; sequence MEATATKEHL…SNDLPLNVSR (343 aa). Residues 344 to 564 form a b region; the sequence is EILQESKDIE…THDMSGNLER (221 aa). The tract at residues 565-639 is c; sequence LLKSAGQKVT…QLFLSTGSKE (75 aa).

This sequence belongs to the heat shock protein 90 family. In terms of assembly, homodimer.

The protein resides in the cytoplasm. Its function is as follows. Molecular chaperone. Has ATPase activity. This chain is Chaperone protein HtpG, found in Nitrosospira multiformis (strain ATCC 25196 / NCIMB 11849 / C 71).